We begin with the raw amino-acid sequence, 228 residues long: Prolactin-2A1 (228 aa).

A signal peptide spans M1–A28. Disulfide bonds link C87–C203 and C220–C228.

This sequence belongs to the somatotropin/prolactin family. As to expression, expressed specifically in the placenta. Expression restricted to the junctional zone of the chorioallantoic placenta.

The protein localises to the secreted. In Mus musculus (Mouse), this protein is Prolactin-2A1 (Prl2a1).